The sequence spans 153 residues: Inner membrane protein YjiG (153 aa).

Residues 1–31 (MTTQVRKNVMDMFIDGARRGFTIATTNLLPN) lie on the Periplasmic side of the membrane. A helical membrane pass occupies residues 32–52 (VVMAFVIIQALKITGLLDWVG). Topologically, residues 53-68 (HICEPVMALWGLPGEA) are cytoplasmic. 2 helical membrane-spanning segments follow: residues 69-89 (ATVL…AASL) and 90-110 (ATAG…MYLM). Topologically, residues 111 to 132 (GNPVQNVGRCLGTAEVNAKYYP) are cytoplasmic. A helical membrane pass occupies residues 133 to 153 (HIITVCVINALLSIWVMQLIV).

The protein belongs to the SpmB family.

It is found in the cell inner membrane. In Escherichia coli O157:H7, this protein is Inner membrane protein YjiG (yjiG).